We begin with the raw amino-acid sequence, 301 residues long: Coiled-coil domain-containing protein 50 (301 aa).

The stretch at Q57–H131 forms a coiled coil. Composition is skewed to basic and acidic residues over residues Q123–E142, V161–E175, and A214–S262. Disordered regions lie at residues Q123–E175 and A214–Q301.

In terms of processing, phosphorylated on tyrosine residues.

Involved in EGFR signaling. The chain is Coiled-coil domain-containing protein 50 (CCDC50) from Gallus gallus (Chicken).